The sequence spans 359 residues: Dihydroorotate dehydrogenase (quinone) (359 aa).

Residues 68–72 (AGFDK) and threonine 92 contribute to the FMN site. Position 72 (lysine 72) interacts with substrate. 117 to 121 (NRMGF) contributes to the substrate binding site. Positions 145 and 176 each coordinate FMN. Position 176 (asparagine 176) interacts with substrate. Serine 179 (nucleophile) is an active-site residue. Substrate is bound at residue asparagine 181. FMN contacts are provided by lysine 212 and threonine 240. Residue 241–242 (NT) coordinates substrate. Residues glycine 266, glycine 295, and 316-317 (YT) each bind FMN.

Belongs to the dihydroorotate dehydrogenase family. Type 2 subfamily. Monomer. It depends on FMN as a cofactor.

The protein resides in the cell membrane. It carries out the reaction (S)-dihydroorotate + a quinone = orotate + a quinol. It functions in the pathway pyrimidine metabolism; UMP biosynthesis via de novo pathway; orotate from (S)-dihydroorotate (quinone route): step 1/1. Its function is as follows. Catalyzes the conversion of dihydroorotate to orotate with quinone as electron acceptor. The chain is Dihydroorotate dehydrogenase (quinone) from Corynebacterium striatum.